Reading from the N-terminus, the 297-residue chain is Non-homologous end-joining factor 1 (297 aa).

The globular head stretch occupies residues 1 to 131 (MDARLLQLPW…ATVSTVCRHL (131 aa)). A C-terminal tail region spans residues 220-286 (PKAPTHPKEE…LTHRPPAGAS (67 aa)). The disordered stretch occupies residues 222-297 (APTHPKEEDT…PKKKAKGLFM (76 aa)). Positions 232 to 255 (GNSASHRPMAESSSISFEKTVPTQ) are enriched in polar residues. A compositionally biased stretch (low complexity) spans 263–286 (VSEPSQVPQSSVSCLTHRPPAGAS). Positions 287 to 297 (KPKKKAKGLFM) match the XLM motif. The span at 287–297 (KPKKKAKGLFM) shows a compositional bias: basic residues.

Belongs to the XRCC4-XLF family. XLF subfamily. Homodimer. Interacts with xrcc4; the interaction is direct and is mediated via a head-to-head interaction between N-terminal head regions. Component of the core long-range non-homologous end joining (NHEJ) complex (also named DNA-PK complex) composed of prkdc/DNA-PKcs, lig4, xrcc4, xrcc6/Ku70, xrcc5/Ku80 and nhej1/xlf.

The protein resides in the nucleus. In terms of biological role, DNA repair protein involved in DNA non-homologous end joining (NHEJ); required for double-strand break (DSB) repair and V(D)J recombination. It is also involved in telomere maintenance. Plays a key role in NHEJ by promoting the ligation of various mismatched and non-cohesive ends. In some studies, has been shown to associate with xrcc4 to form alternating helical filaments that bridge DNA and act like a bandage, holding together the broken DNA until it is repaired. Alternatively, it has also been shown that rather than forming filaments, a single nhej1 dimer interacts through both head domains with xrcc4 to promote the close alignment of DNA ends. The xrcc4-nhej1/xlf subcomplex binds to the DNA fragments of a DSB in a highly diffusive manner and robustly bridges two independent DNA molecules, holding the broken DNA fragments in close proximity to one other. The mobility of the bridges ensures that the ends remain accessible for further processing by other repair factors. This is Non-homologous end-joining factor 1 from Xenopus laevis (African clawed frog).